Reading from the N-terminus, the 240-residue chain is (DL)-glycerol-3-phosphatase 2 (240 aa).

Residue D20 is the Nucleophile of the active site. D20, D22, and D185 together coordinate Mg(2+). D22 acts as the Proton donor in catalysis.

Belongs to the HAD-like hydrolase superfamily. DOG/GPP family. It depends on Mg(2+) as a cofactor. Ubiquitous with highest expression in siliques. Mainly restricted to the meristem of immature flower and vascular elements of the root, shoot, leave, siliqua and developing embryo (at the protein level).

It is found in the cytoplasm. It carries out the reaction sn-glycerol 1-phosphate + H2O = glycerol + phosphate. It catalyses the reaction sn-glycerol 3-phosphate + H2O = glycerol + phosphate. Acts as a glycerol-3-phosphatase with higher stereospecificity for L-glycerol-3-phosphate than DL-glycerol-3-phosphate. This is (DL)-glycerol-3-phosphatase 2 (GPP2) from Arabidopsis thaliana (Mouse-ear cress).